The primary structure comprises 127 residues: Large ribosomal subunit protein bL17 (127 aa).

It belongs to the bacterial ribosomal protein bL17 family. As to quaternary structure, part of the 50S ribosomal subunit. Contacts protein L32.

This Salmonella paratyphi A (strain AKU_12601) protein is Large ribosomal subunit protein bL17.